The following is an 899-amino-acid chain: Putative lipoxygenase 5 (899 aa).

Disordered regions lie at residues 15 to 34 (AGSR…RSTA), 48 to 68 (APVE…SVAA), and 258 to 291 (VASA…SAES). In terms of domain architecture, PLAT spans 68-204 (ARAVVTVRRR…VSRDRRVFFS (137 aa)). The 693-residue stretch at 207–899 (PYLPSETPPG…CRGVPNSVTI (693 aa)) folds into the Lipoxygenase domain. Residues His-559, His-564, His-751, Asn-755, and Ile-899 each coordinate Fe cation.

This sequence belongs to the lipoxygenase family. It depends on Fe cation as a cofactor.

It carries out the reaction (9Z,12Z)-octadecadienoate + O2 = (13S)-hydroperoxy-(9Z,11E)-octadecadienoate. The catalysed reaction is (9Z,12Z,15Z)-octadecatrienoate + O2 = (13S)-hydroperoxy-(9Z,11E,15Z)-octadecatrienoate. Its pathway is lipid metabolism; oxylipin biosynthesis. Its function is as follows. Plant lipoxygenase may be involved in a number of diverse aspects of plant physiology including growth and development, pest resistance, and senescence or responses to wounding. Catalyzes the hydroperoxidation of lipids containing a cis,cis-1,4-pentadiene structure. This is Putative lipoxygenase 5 from Oryza sativa subsp. japonica (Rice).